The primary structure comprises 352 residues: MQITAKMVKDLRESTGAGMMDCKKALVEANGDMEQAIKVLHEKGLGKAAKKADRLASEGLVCVLVNSDFSKATISEINSETDFVAKNDKFINFVNNTTKHIQDSNITNVEALNNSLINGEKFSDFITNQIATIGENLVVRRFNTINANGGVLNGYLHSNSRVGVIISATCENVDRKKAADFIYQLCMHAAAMKPSVISYKEFNPDFLKSELTALKAELEKENEELKRLGKPLNHIPEFASRAQISDEIIEKEKEKIRAELKKEGKPEKIWDKIIPGKLERFLADNTLLDQRLTLLGQFFVMDDKKTIEQVIDEKSKEFGGKITITNYIRYEVGEGLEKKSEDFAAEVAAQIG.

Residues 81-84 (TDFV) are involved in Mg(2+) ion dislocation from EF-Tu.

The protein belongs to the EF-Ts family.

It localises to the cytoplasm. Functionally, associates with the EF-Tu.GDP complex and induces the exchange of GDP to GTP. It remains bound to the aminoacyl-tRNA.EF-Tu.GTP complex up to the GTP hydrolysis stage on the ribosome. This chain is Elongation factor Ts, found in Campylobacter hominis (strain ATCC BAA-381 / DSM 21671 / CCUG 45161 / LMG 19568 / NCTC 13146 / CH001A).